A 115-amino-acid polypeptide reads, in one-letter code: Con-Ins G1c (115 aa).

The N-terminal stretch at 1–24 is a signal peptide; the sequence is MTTSFYFLLMALGLLLYVCQSSFG. A propeptide spanning residues 25–29 is cleaved from the precursor; that stretch reads NQHTR. P34 carries the post-translational modification 4-hydroxyproline; partial. Cystine bridges form between C38-C101, C50-C114, and C100-C105. E41 carries the 4-carboxyglutamate modification. The propeptide at 53–94 is c peptide; it reads KRNDAGKKRGRASPLWQRRGSLSQLKARAKRNGAFHLPRDGR. E98 bears the 4-carboxyglutamate mark. 4-hydroxyproline; partial is present on P104. 4-carboxyglutamate; partial is present on E109.

It belongs to the insulin family. In terms of assembly, heterodimer of A and B chains; disulfide-linked. In terms of processing, is different from Con-Ins G1a (AC A0A0B5AC95) due to absence of amidation at Cys-114. In terms of tissue distribution, expressed by the venom gland.

It localises to the secreted. Functionally, this venom insulin, from a fish-hunting cone snail, facilitates prey capture by rapidly inducing hypoglycemic shock. It is one of the smallest known insulin found in nature and lacks the C-terminal segment of the B chain that, in human insulin, mediates engagement of the insulin receptor (INSR) and assembly of the hormone's hexameric storage form. Despite lacking this segment, it both binds and activates human insulin receptor (long isoform (HIR-B)) with only a 10-fold lower potency. In vivo, intraperitoneal injection of this peptide into zebrafish lowers blood glucose with the same potency than human insulin. In addition, when applied to water, this peptide reduces overall locomotor activity of zebrafish larvae, observed as a significant decrease in the percentage of time spent swimming and movement frequency. This is Con-Ins G1c from Conus geographus (Geography cone).